Here is a 95-residue protein sequence, read N- to C-terminus: Large ribosomal subunit protein uL23 (95 aa).

Belongs to the universal ribosomal protein uL23 family. Part of the 50S ribosomal subunit. Contacts protein L29, and trigger factor when it is bound to the ribosome.

Its function is as follows. One of the early assembly proteins it binds 23S rRNA. One of the proteins that surrounds the polypeptide exit tunnel on the outside of the ribosome. Forms the main docking site for trigger factor binding to the ribosome. This Deinococcus deserti (strain DSM 17065 / CIP 109153 / LMG 22923 / VCD115) protein is Large ribosomal subunit protein uL23.